Reading from the N-terminus, the 470-residue chain is Chromosomal replication initiator protein DnaA (470 aa).

The interval 1 to 68 (MENFWSLCLG…SALAEEVLST (68 aa)) is domain I, interacts with DnaA modulators. Residues 68 to 133 (TPVQIELALY…KKPKTLTETS (66 aa)) are domain II. A domain III, AAA+ region region spans residues 134-350 (GLNPAFRFDN…GALNRIIAMA (217 aa)). ATP contacts are provided by glycine 178, glycine 180, lysine 181, and threonine 182. Residues 351–470 (NFTGHAIDVS…IAVLIQVIRD (120 aa)) are domain IV, binds dsDNA.

It belongs to the DnaA family. Oligomerizes as a right-handed, spiral filament on DNA at oriC.

Its subcellular location is the cytoplasm. Functionally, plays an essential role in the initiation and regulation of chromosomal replication. ATP-DnaA binds to the origin of replication (oriC) to initiate formation of the DNA replication initiation complex once per cell cycle. Binds the DnaA box (a 9 base pair repeat at the origin) and separates the double-stranded (ds)DNA. Forms a right-handed helical filament on oriC DNA; dsDNA binds to the exterior of the filament while single-stranded (ss)DNA is stabiized in the filament's interior. The ATP-DnaA-oriC complex binds and stabilizes one strand of the AT-rich DNA unwinding element (DUE), permitting loading of DNA polymerase. After initiation quickly degrades to an ADP-DnaA complex that is not apt for DNA replication. Binds acidic phospholipids. The polypeptide is Chromosomal replication initiator protein DnaA (Methylobacillus flagellatus (strain ATCC 51484 / DSM 6875 / VKM B-1610 / KT)).